The sequence spans 166 residues: MQKVTFKEETYQLEGKALKVGDKAPDVKLVNGDLQEVNLLKQGVRFQVVSALPSLTGSVCLLQAKHFNEQAGKLPSVSFSVISMDLPFSQGQICGAEGIKDLRILSDFRYKAFGENYGVLLGKGSLQGLLARSVFVLDDKGVVIYKEIVQNILEEPNYEALLKVLK.

The Thioredoxin domain maps to 18–166 (LKVGDKAPDV…NYEALLKVLK (149 aa)). The active-site Cysteine sulfenic acid (-SOH) intermediate is the Cys-60. Cysteines 60 and 94 form a disulfide.

The protein belongs to the peroxiredoxin family. Tpx subfamily. In terms of assembly, homodimer.

The catalysed reaction is a hydroperoxide + [thioredoxin]-dithiol = an alcohol + [thioredoxin]-disulfide + H2O. Functionally, thiol-specific peroxidase that catalyzes the reduction of hydrogen peroxide and organic hydroperoxides to water and alcohols, respectively. Plays a role in cell protection against oxidative stress by detoxifying peroxides. The chain is Thiol peroxidase from Helicobacter pylori (strain J99 / ATCC 700824) (Campylobacter pylori J99).